Reading from the N-terminus, the 311-residue chain is Pantothenate kinase (311 aa).

93–100 (GSVAVGKS) contacts ATP.

Belongs to the prokaryotic pantothenate kinase family.

The protein localises to the cytoplasm. It carries out the reaction (R)-pantothenate + ATP = (R)-4'-phosphopantothenate + ADP + H(+). Its pathway is cofactor biosynthesis; coenzyme A biosynthesis; CoA from (R)-pantothenate: step 1/5. In Haemophilus influenzae (strain ATCC 51907 / DSM 11121 / KW20 / Rd), this protein is Pantothenate kinase (coaA).